A 94-amino-acid polypeptide reads, in one-letter code: Large ribosomal subunit protein uL23 (94 aa).

This sequence belongs to the universal ribosomal protein uL23 family. Part of the 50S ribosomal subunit. Contacts protein L29, and trigger factor when it is bound to the ribosome.

In terms of biological role, one of the early assembly proteins it binds 23S rRNA. One of the proteins that surrounds the polypeptide exit tunnel on the outside of the ribosome. Forms the main docking site for trigger factor binding to the ribosome. The protein is Large ribosomal subunit protein uL23 of Roseiflexus castenholzii (strain DSM 13941 / HLO8).